The chain runs to 599 residues: Elongation factor 4 (599 aa).

Residues 4–186 (EHIRNFSIIA…EIVKKIPPPQ (183 aa)) form the tr-type G domain. GTP contacts are provided by residues 16–21 (DHGKST) and 133–136 (NKID).

Belongs to the TRAFAC class translation factor GTPase superfamily. Classic translation factor GTPase family. LepA subfamily.

It localises to the cell inner membrane. It catalyses the reaction GTP + H2O = GDP + phosphate + H(+). Required for accurate and efficient protein synthesis under certain stress conditions. May act as a fidelity factor of the translation reaction, by catalyzing a one-codon backward translocation of tRNAs on improperly translocated ribosomes. Back-translocation proceeds from a post-translocation (POST) complex to a pre-translocation (PRE) complex, thus giving elongation factor G a second chance to translocate the tRNAs correctly. Binds to ribosomes in a GTP-dependent manner. In Geobacter sp. (strain M21), this protein is Elongation factor 4.